The chain runs to 282 residues: Pantothenate synthetase (282 aa).

An ATP-binding site is contributed by Met30–His37. Catalysis depends on His37, which acts as the Proton donor. Gln61 lines the (R)-pantoate pocket. Residue Gln61 coordinates beta-alanine. Gly149–Asp152 is a binding site for ATP. Gln155 is a (R)-pantoate binding site. ATP is bound by residues Ile178 and Met186–Arg189.

This sequence belongs to the pantothenate synthetase family. In terms of assembly, homodimer.

It localises to the cytoplasm. It carries out the reaction (R)-pantoate + beta-alanine + ATP = (R)-pantothenate + AMP + diphosphate + H(+). It functions in the pathway cofactor biosynthesis; (R)-pantothenate biosynthesis; (R)-pantothenate from (R)-pantoate and beta-alanine: step 1/1. In terms of biological role, catalyzes the condensation of pantoate with beta-alanine in an ATP-dependent reaction via a pantoyl-adenylate intermediate. This chain is Pantothenate synthetase, found in Shewanella loihica (strain ATCC BAA-1088 / PV-4).